The following is a 99-amino-acid chain: Nucleoid-associated protein SpyM3_1606 (99 aa).

The protein belongs to the YbaB/EbfC family. As to quaternary structure, homodimer.

It is found in the cytoplasm. Its subcellular location is the nucleoid. Functionally, binds to DNA and alters its conformation. May be involved in regulation of gene expression, nucleoid organization and DNA protection. This is Nucleoid-associated protein SpyM3_1606 from Streptococcus pyogenes serotype M3 (strain ATCC BAA-595 / MGAS315).